The chain runs to 383 residues: Dihydroorotase (383 aa).

Residues His-47 and His-49 each coordinate Zn(2+). Residues 49-51 (HFR) and Asn-81 each bind substrate. Residues Lys-128, His-159, His-198, and Asp-264 each contribute to the Zn(2+) site. Position 128 is an N6-carboxylysine (Lys-128). Asp-264 is an active-site residue. Substrate is bound by residues His-268 and 280 to 281 (PG).

Belongs to the metallo-dependent hydrolases superfamily. DHOase family. Class I DHOase subfamily. Zn(2+) is required as a cofactor.

It catalyses the reaction (S)-dihydroorotate + H2O = N-carbamoyl-L-aspartate + H(+). The protein operates within pyrimidine metabolism; UMP biosynthesis via de novo pathway; (S)-dihydroorotate from bicarbonate: step 3/3. Catalyzes the reversible cyclization of carbamoyl aspartate to dihydroorotate. The protein is Dihydroorotase of Pyrobaculum aerophilum (strain ATCC 51768 / DSM 7523 / JCM 9630 / CIP 104966 / NBRC 100827 / IM2).